Consider the following 583-residue polypeptide: Estrogen receptor (583 aa).

The tract at residues 1–138 is modulating; sequence MYPEESRGSG…GFEITKNTRF (138 aa). NR C4-type zinc fingers lie at residues 139–159 and 175–199; these read CAVC…CEGC and CPAT…LRKC. A DNA-binding region (nuclear receptor) is located at residues 139-204; it reads CAVCSDYASG…RLRKCYEVGM (66 aa). Residues 205–265 are hinge; it reads MKGGMRKDRG…PGGRSSLNNM (61 aa). The tract at residues 220 to 263 is disordered; sequence EKHGPAQRQTSQNLPTHKASPQDGRKRAMSSSSTSGPGGRSSLN. In terms of domain architecture, NR LBD spans 266-501; it reads PPDQVLLLLQ…DLLLEMLDAH (236 aa). Residues 506-583 form a disordered region; it reads PVKPSQSWSQ…GSHSDCTRIP (78 aa). A compositionally biased stretch (low complexity) spans 539–551; the sequence is ASSAGSSSGPQGS.

It belongs to the nuclear hormone receptor family. NR3 subfamily. In terms of assembly, binds DNA as a homodimer. Can form a heterodimer with ER-beta.

It localises to the nucleus. In terms of biological role, the steroid hormones and their receptors are involved in the regulation of eukaryotic gene expression and affect cellular proliferation and differentiation in target tissues. The protein is Estrogen receptor (esr1) of Oreochromis aureus (Israeli tilapia).